The primary structure comprises 456 residues: Acyl-CoA transferase FPSE_08120 (456 aa).

Residues 1-33 (MARLLFSGQRLRPSFLRSYIRANPSSTPSATRA) constitute a mitochondrion transit peptide.

The protein belongs to the CoA-transferase III family.

It localises to the mitochondrion. In terms of biological role, acyl-CoA transferase; part of the Fusarium detoxification of benzoxazolinone cluster involved in the degradation of benzoxazolinones produced by the host plant. Maize, wheat, and rye produce the 2 benzoxazinone phytoanticipins 2,4-dihy-droxy-7-methoxy-1,4-benzoxazin-3-one (DIMBOA) and 2,4-dihydroxy-1,4-benzoxazin-3-one (DIBOA) that, due to their inherent instability once released, spontaneously degrade to the more stable corresponding benzoxazolinones, 6-methoxy-2-benzoxazolinone (MBOA) and 2-benzoxazolinone (BOA), respectively. The first step in the detoxification of benzoxazolinones involves the hydrolysis of the cyclic ester bond of benzoxazolinones by the gamma-lactamase FDB1 to aminophenols. FDB1 is able to convert 2-benzoxazolinone (BOA) into 2-aminophenol (2-AP), as well as 6-methoxy-2-benzoxazolinone (MBOA) into 5-methoxy-2-aminophenol (2-AMP). The N-malonyltransferase FDB2 then metabolizes aminophenols via N-malonylation to non-toxic malonamic acids. FDB2 converts 2-AP into N-(2-hydroxyphenyl) malonamic acid (HPMA) and 2-AMP into N-(2-hydroxy-4-methoxyphenyl) malonamic acid (HMPMA). The cluster also contains 2 transcription factors (FDB3 and FPSE_08121), an aldo-keto reductase (FPSE_08125) that possibly associates with a ketone component of BOA and MBOA degradation, an esterase (FPSE_08126), an acyl-CoA transferase (FPSE_08120), a solute carrier protein (FPSE_08119) and a transmembrane transporter (FPSE_08127) proposed to shuttle metabolites of benzoxazolinone degradation. In Fusarium pseudograminearum (strain CS3096) (Wheat and barley crown-rot fungus), this protein is Acyl-CoA transferase FPSE_08120.